We begin with the raw amino-acid sequence, 130 residues long: Small ribosomal subunit protein uS9 (130 aa).

This sequence belongs to the universal ribosomal protein uS9 family.

This Haemophilus influenzae (strain 86-028NP) protein is Small ribosomal subunit protein uS9.